Reading from the N-terminus, the 204-residue chain is Somatotropin (204 aa).

The first 17 residues, 1-17, serve as a signal peptide directing secretion; the sequence is MERAVLLLSLLSLGVSS. Gln-18 is subject to Pyrrolidone carboxylic acid. His-36 serves as a coordination point for Zn(2+). An intrachain disulfide couples Cys-69 to Cys-177. Zn(2+) is bound at residue Glu-186. Cys-194 and Cys-202 are disulfide-bonded.

Belongs to the somatotropin/prolactin family.

Its subcellular location is the secreted. Its function is as follows. Growth hormone plays an important role in growth control and involved in the regulation of several anabolic processes. The sequence is that of Somatotropin (gh) from Perca flavescens (American yellow perch).